A 427-amino-acid polypeptide reads, in one-letter code: Flotillin-1 (427 aa).

Ser19, Ser163, and Ser385 each carry phosphoserine. Thr387 carries the post-translational modification Phosphothreonine.

It belongs to the band 7/mec-2 family. Flotillin subfamily. Heterooligomeric complex of flotillin-1 and flotillin-2 and caveolin-1 and caveolin-2. Interacts with ECPAS.

Its subcellular location is the cell membrane. The protein localises to the endosome. It localises to the membrane. It is found in the caveola. The protein resides in the melanosome. Its subcellular location is the membrane raft. Its function is as follows. May act as a scaffolding protein within caveolar membranes, functionally participating in formation of caveolae or caveolae-like vesicles. The polypeptide is Flotillin-1 (FLOT1) (Sus scrofa (Pig)).